The following is a 219-amino-acid chain: Carbonic anhydrase 1 (219 aa).

The Zn(2+) site is built by Cys-39, Asp-41, His-98, and Cys-101.

This sequence belongs to the beta-class carbonic anhydrase family. Oligomer. It depends on Zn(2+) as a cofactor.

The catalysed reaction is hydrogencarbonate + H(+) = CO2 + H2O. Reversible hydration of carbon dioxide. Carbon dioxide formed in the bicarbonate-dependent decomposition of cyanate by cyanase (CynS) diffuses out of the cell faster than it would be hydrated to bicarbonate, so the apparent function of this enzyme is to catalyze the hydration of carbon dioxide and thus prevent depletion of cellular bicarbonate. This is Carbonic anhydrase 1 (cynT) from Escherichia coli O157:H7.